Here is a 2499-residue protein sequence, read N- to C-terminus: Probable polyketide synthase 23 (2499 aa).

Residues Asp11 to Glu430 form the Ketosynthase family 3 (KS3) domain. Catalysis depends on for beta-ketoacyl synthase activity residues Cys177, His316, and His354. The acyl/malonyl transferases stretch occupies residues Gly623–Tyr656. Ser633 acts as the For acyl/malonyl transferase activity in catalysis. The segment at Ile924–Val1044 is N-terminal hotdog fold. One can recognise a PKS/mFAS DH domain in the interval Ile924–Asp1209. His956 acts as the Proton acceptor; for dehydratase activity in catalysis. A C-terminal hotdog fold region spans residues Asn1059–Asp1209. The Proton donor; for dehydratase activity role is filled by Asp1121. One can recognise a Carrier domain in the interval Glu2414–Val2491. The residue at position 2451 (Ser2451) is an O-(pantetheine 4'-phosphoryl)serine.

Pantetheine 4'-phosphate serves as cofactor.

Probable polyketide synthase. This chain is Probable polyketide synthase 23 (pks23), found in Dictyostelium discoideum (Social amoeba).